Here is a 159-residue protein sequence, read N- to C-terminus: Ribosomal RNA large subunit methyltransferase H (159 aa).

S-adenosyl-L-methionine is bound by residues Leu76, Gly108, and 127-132 (FSRMTF).

Belongs to the RNA methyltransferase RlmH family. As to quaternary structure, homodimer.

It is found in the cytoplasm. It carries out the reaction pseudouridine(1915) in 23S rRNA + S-adenosyl-L-methionine = N(3)-methylpseudouridine(1915) in 23S rRNA + S-adenosyl-L-homocysteine + H(+). Functionally, specifically methylates the pseudouridine at position 1915 (m3Psi1915) in 23S rRNA. This chain is Ribosomal RNA large subunit methyltransferase H, found in Bacillus licheniformis (strain ATCC 14580 / DSM 13 / JCM 2505 / CCUG 7422 / NBRC 12200 / NCIMB 9375 / NCTC 10341 / NRRL NRS-1264 / Gibson 46).